We begin with the raw amino-acid sequence, 256 residues long: tRNA (guanine-N(7)-)-methyltransferase (256 aa).

S-adenosyl-L-methionine contacts are provided by Glu-85, Glu-110, Asp-137, and Asp-159. Asp-159 is a catalytic residue. Lys-163 and Asp-195 together coordinate substrate.

This sequence belongs to the class I-like SAM-binding methyltransferase superfamily. TrmB family.

It catalyses the reaction guanosine(46) in tRNA + S-adenosyl-L-methionine = N(7)-methylguanosine(46) in tRNA + S-adenosyl-L-homocysteine. Its pathway is tRNA modification; N(7)-methylguanine-tRNA biosynthesis. Its function is as follows. Catalyzes the formation of N(7)-methylguanine at position 46 (m7G46) in tRNA. In Rhodopseudomonas palustris (strain HaA2), this protein is tRNA (guanine-N(7)-)-methyltransferase.